A 134-amino-acid chain; its full sequence is Transcription factor atoh7 (134 aa).

Residues 1 to 27 (MKPRRPSCADSGSDSDSRDPEKFESAM) are disordered. Positions 15-27 (SDSRDPEKFESAM) are enriched in basic and acidic residues. A bHLH domain is found at 28 to 80 (RRRMAANARERKRMQGLNTAFDRLRKVVPQWGQDKKLSKYETLQMALSYIMAL).

The protein localises to the nucleus. It localises to the perikaryon. The protein resides in the cell projection. It is found in the axon. In terms of biological role, transcription factor that binds to DNA at the consensus sequence 5'-CAG[GC]TG-3'. Involved in the differentiation of retinal ganglion cells, photoreceptor population and optic nerve development. Required for retinal circadian rhythm photoentrainment. The protein is Transcription factor atoh7 of Danio rerio (Zebrafish).